Reading from the N-terminus, the 448-residue chain is Adenylosuccinate synthetase (448 aa).

GTP contacts are provided by residues 22–28 (GDEGKGK) and 50–52 (GHT). Asp-23 (proton acceptor) is an active-site residue. The Mg(2+) site is built by Asp-23 and Gly-50. IMP contacts are provided by residues 23-26 (DEGK), 48-51 (NAGH), Thr-139, Arg-153, Gln-234, Thr-249, and Arg-321. The Proton donor role is filled by His-51. A substrate-binding site is contributed by 317–323 (SVTGRPR). GTP-binding positions include Arg-323, 349–351 (KLD), and 431–433 (STG).

The protein belongs to the adenylosuccinate synthetase family. In terms of assembly, homodimer. Requires Mg(2+) as cofactor.

The protein localises to the cytoplasm. It carries out the reaction IMP + L-aspartate + GTP = N(6)-(1,2-dicarboxyethyl)-AMP + GDP + phosphate + 2 H(+). The protein operates within purine metabolism; AMP biosynthesis via de novo pathway; AMP from IMP: step 1/2. Functionally, plays an important role in the de novo pathway of purine nucleotide biosynthesis. Catalyzes the first committed step in the biosynthesis of AMP from IMP. This is Adenylosuccinate synthetase from Burkholderia pseudomallei (strain 1106a).